We begin with the raw amino-acid sequence, 556 residues long: Potassium-transporting ATPase potassium-binding subunit (556 aa).

12 helical membrane passes run 3–23 (AHGV…TPIL), 57–77 (AAYA…LYAL), 129–149 (GLTV…VALM), 172–192 (LGLL…QGVP), 247–267 (LVNL…TNTF), 278–298 (WALL…AWWA), 319–339 (LGVA…CGAV), 346–366 (LLPL…VVVG), 371–391 (GLYG…LMVG), 408–428 (LAVI…GLAI), 486–506 (FVVM…MAVP), and 516–536 (GWLF…LTYF).

Belongs to the KdpA family. In terms of assembly, the system is composed of three essential subunits: KdpA, KdpB and KdpC.

Its subcellular location is the cell inner membrane. Its function is as follows. Part of the high-affinity ATP-driven potassium transport (or Kdp) system, which catalyzes the hydrolysis of ATP coupled with the electrogenic transport of potassium into the cytoplasm. This subunit binds the periplasmic potassium ions and delivers the ions to the membrane domain of KdpB through an intramembrane tunnel. This Paramagnetospirillum magneticum (strain ATCC 700264 / AMB-1) (Magnetospirillum magneticum) protein is Potassium-transporting ATPase potassium-binding subunit.